The chain runs to 329 residues: Phosphate acyltransferase (329 aa).

The protein belongs to the PlsX family. In terms of assembly, homodimer. Probably interacts with PlsY.

The protein localises to the cytoplasm. The catalysed reaction is a fatty acyl-[ACP] + phosphate = an acyl phosphate + holo-[ACP]. It functions in the pathway lipid metabolism; phospholipid metabolism. Functionally, catalyzes the reversible formation of acyl-phosphate (acyl-PO(4)) from acyl-[acyl-carrier-protein] (acyl-ACP). This enzyme utilizes acyl-ACP as fatty acyl donor, but not acyl-CoA. This is Phosphate acyltransferase from Exiguobacterium sp. (strain ATCC BAA-1283 / AT1b).